A 444-amino-acid polypeptide reads, in one-letter code: NEDD8-activating enzyme E1 catalytic subunit (444 aa).

Position 54 to 78 (54 to 78 (GLGCEILKDLALSGFRDLSVIDMDT)) interacts with ATP. Residue Cys205 is the Glycyl thioester intermediate of the active site.

It belongs to the ubiquitin-activating E1 family. UBA3 subfamily. As to quaternary structure, heterodimer of uba3 and ula1. Interacts with NEDD8 and ubc12. Interacts with but1 and but2.

The catalysed reaction is ATP + [NEDD8 protein] + [E1 NEDD8-activating enzyme]-L-cysteine = AMP + diphosphate + [E1 NEDD8-activating enzyme]-S-[NEDD8 protein]-yl-L-cysteine.. It participates in protein modification; protein neddylation. Its function is as follows. Catalytic subunit of the dimeric uba3-ula1 E1 enzyme. E1 activates NEDD8/ubl1 by first adenylating its C-terminal glycine residue with ATP, thereafter linking this residue to the side chain of the catalytic cysteine, yielding a NEDD8-uba3 thioester and free AMP. E1 finally transfers NEDD8 to the catalytic cysteine of ubc12. The chain is NEDD8-activating enzyme E1 catalytic subunit (uba3) from Schizosaccharomyces pombe (strain 972 / ATCC 24843) (Fission yeast).